Here is a 122-residue protein sequence, read N- to C-terminus: Large ribosomal subunit protein uL14c (122 aa).

It belongs to the universal ribosomal protein uL14 family. In terms of assembly, part of the 50S ribosomal subunit.

It localises to the plastid. Its subcellular location is the chloroplast. Binds to 23S rRNA. The sequence is that of Large ribosomal subunit protein uL14c from Citrus sinensis (Sweet orange).